Consider the following 742-residue polypeptide: Two-component response regulator-like PRR37 (742 aa).

A Response regulatory domain is found at 63–181 (KVLLVDSDDS…ELKNLWQHVW (119 aa)). Positions 186-195 (SSSGSGSESG) are enriched in low complexity. Disordered regions lie at residues 186–249 (SSSG…SWTK), 290–346 (PCTS…PLQN), 375–402 (DAQQ…NRDN), 478–570 (MKSN…VQSN), 590–671 (NGGS…GNDM), and 697–742 (NFGK…AADR). The span at 236 to 248 (DNGSGTQAQSSWT) shows a compositional bias: polar residues. Positions 299 to 313 (KQKETNDDFKGKDLE) are enriched in basic and acidic residues. Residues 318-330 (RNLNTAYQSSPNE) are compositionally biased toward polar residues. Over residues 331–341 (RSIKPTDRRNE) the composition is skewed to basic and acidic residues. Residues 380–390 (ARATNAPNCSS) are compositionally biased toward polar residues. Positions 490–502 (GSNGSSNNNDMGS) are enriched in low complexity. Polar residues predominate over residues 503 to 512 (TTKNVVTKPS). Positions 618–634 (NGSNSGSNNGSNGQNGS) are enriched in low complexity. A compositionally biased stretch (gly residues) spans 656-667 (GPGGGNGSGSGS). The 43-residue stretch at 682–724 (RVAAVIKFRQKRKERNFGKKVRYQSRKRLAEQRPRVRGQFVRQ) folds into the CCT domain. Residues 697–708 (NFGKKVRYQSRK) show a composition bias toward basic residues. Residues 719–731 (GQFVRQAVQDQQQ) are compositionally biased toward low complexity.

It belongs to the ARR-like family.

The protein resides in the nucleus. Its function is as follows. Controls photoperiodic flowering response. Seems to be one of the component of the circadian clock. Expression of several members of the ARR-like family is controlled by circadian rhythm. The particular coordinated sequential expression of PRR73, PRR37, PRR95, PRR59 and PPR1 result to circadian waves that may be at the basis of the endogenous circadian clock. This chain is Two-component response regulator-like PRR37 (PRR37), found in Oryza sativa subsp. indica (Rice).